The sequence spans 369 residues: Dual-specificity RNA methyltransferase RlmN (369 aa).

Glutamate 96 functions as the Proton acceptor in the catalytic mechanism. In terms of domain architecture, Radical SAM core spans aspartate 102–aspartate 338. Cysteines 109 and 344 form a disulfide. 3 residues coordinate [4Fe-4S] cluster: cysteine 116, cysteine 120, and cysteine 123. S-adenosyl-L-methionine is bound by residues glycine 169–glutamate 170, serine 201, serine 223–histidine 225, and asparagine 301. The active-site S-methylcysteine intermediate is the cysteine 344.

Belongs to the radical SAM superfamily. RlmN family. [4Fe-4S] cluster serves as cofactor.

It localises to the cytoplasm. It carries out the reaction adenosine(2503) in 23S rRNA + 2 reduced [2Fe-2S]-[ferredoxin] + 2 S-adenosyl-L-methionine = 2-methyladenosine(2503) in 23S rRNA + 5'-deoxyadenosine + L-methionine + 2 oxidized [2Fe-2S]-[ferredoxin] + S-adenosyl-L-homocysteine. The catalysed reaction is adenosine(37) in tRNA + 2 reduced [2Fe-2S]-[ferredoxin] + 2 S-adenosyl-L-methionine = 2-methyladenosine(37) in tRNA + 5'-deoxyadenosine + L-methionine + 2 oxidized [2Fe-2S]-[ferredoxin] + S-adenosyl-L-homocysteine. In terms of biological role, specifically methylates position 2 of adenine 2503 in 23S rRNA and position 2 of adenine 37 in tRNAs. m2A2503 modification seems to play a crucial role in the proofreading step occurring at the peptidyl transferase center and thus would serve to optimize ribosomal fidelity. The polypeptide is Dual-specificity RNA methyltransferase RlmN (Marinobacter nauticus (strain ATCC 700491 / DSM 11845 / VT8) (Marinobacter aquaeolei)).